Reading from the N-terminus, the 144-residue chain is Peptide methionine sulfoxide reductase MsrB (144 aa).

Over residues 1-12 the composition is skewed to basic and acidic residues; sequence MDKQQGELRQRL. The segment at 1–25 is disordered; that stretch reads MDKQQGELRQRLTPEQYAVTQEAAT. Positions 5–128 constitute a MsrB domain; it reads QGELRQRLTP…NSAALKFIPV (124 aa). C117 (nucleophile) is an active-site residue.

It belongs to the MsrB Met sulfoxide reductase family.

It carries out the reaction L-methionyl-[protein] + [thioredoxin]-disulfide + H2O = L-methionyl-(R)-S-oxide-[protein] + [thioredoxin]-dithiol. This is Peptide methionine sulfoxide reductase MsrB from Lactiplantibacillus plantarum (strain ATCC BAA-793 / NCIMB 8826 / WCFS1) (Lactobacillus plantarum).